The following is a 629-amino-acid chain: Rho GTPase-activating protein conundrum (629 aa).

The tract at residues 185 to 294 (PPKSGTYADI…CRDSSSLDSC (110 aa)) is required for interaction with Moe. A disordered region spans residues 237–261 (SIGRSKESRSENDARSQKKKSSEVL). The segment covering 240-258 (RSKESRSENDARSQKKKSS) has biased composition (basic and acidic residues). The Rho-GAP domain maps to 359–565 (VSINALIRRD…ILILRGEKLF (207 aa)).

As to quaternary structure, interacts with Moe (via FERM domain).

The protein localises to the cytoplasm. Its subcellular location is the cell membrane. It localises to the cell cortex. The protein resides in the cell junction. Its function is as follows. GTPase-activating protein (GAP) for Rho1; functions with the ERM protein Moe to regulate Rho1 and control proliferation in the developing epithelium. Recruited by Moe to the cell cortex where it negatively regulates Rho1 activity. Can also promote cell proliferation independently of its GAP activity, perhaps by acting with Arf6 to positively regulate Rac1. This Drosophila melanogaster (Fruit fly) protein is Rho GTPase-activating protein conundrum.